Consider the following 147-residue polypeptide: TRAF-interacting protein with FHA domain-containing protein B (147 aa).

Positions 36–108 (LLVGRGQDTH…LHSVNRISFS (73 aa)) constitute an FHA domain.

As to quaternary structure, interacts with TIFA.

In terms of biological role, inhibits TIFA-mediated TRAF6 activation possibly by inducing a conformational change in TIFA. The protein is TRAF-interacting protein with FHA domain-containing protein B of Rattus norvegicus (Rat).